The sequence spans 489 residues: MFS-type transporter MFS19 (489 aa).

Over residues 1–12 the composition is skewed to basic and acidic residues; it reads MAHSTAGDRDPE. The disordered stretch occupies residues 1 to 42; the sequence is MAHSTAGDRDPEVGSEQHSSIAQLHTESMSDPWGDSNSPENP. A compositionally biased stretch (polar residues) spans 16 to 41; the sequence is EQHSSIAQLHTESMSDPWGDSNSPEN. Residues 52–72 traverse the membrane as a helical segment; sequence FHVAIVSIFTLTANLAATMFA. Asn83 and Asn86 each carry an N-linked (GlcNAc...) asparagine glycan. The next 11 helical transmembrane spans lie at 91–111, 127–147, 149–169, 180–200, 208–228, 282–302, 321–341, 361–381, 388–408, 425–445, and 454–474; these read AMTV…LAPL, VYIA…FLVF, FLCG…VADI, ALFA…GGYV, WTFR…MFFM, PIVL…FLLF, GLAY…FSIL, LILM…YGWS, WIVP…VVIP, ALAA…LVAA, and GWGN…PWLF.

The protein belongs to the major facilitator superfamily.

It localises to the cell membrane. Functionally, MFS-type efflux pump involved in the modulation susceptibility to various compounds including cumyl hydroperoxide, potassium superoxide, many singlet oxygen-generating compounds (eosin Y, rose Bengal, hematoporphyrin, methylene blue, and cercosporin), and the cell wall biosynthesis inhibitor Congo red. Involved in oxidative stress tolerance, colonization, and lesion formation. This chain is MFS-type transporter MFS19, found in Alternaria alternata (Alternaria rot fungus).